Consider the following 247-residue polypeptide: 2,3-bisphosphoglycerate-dependent phosphoglycerate mutase (247 aa).

Residues 8-15, 21-22, Arg-60, 87-90, Lys-98, 114-115, and 183-184 each bind substrate; these read RHGESQWN, TG, ERHY, RR, and GN. His-9 serves as the catalytic Tele-phosphohistidine intermediate. Residue Glu-87 is the Proton donor/acceptor of the active site.

The protein belongs to the phosphoglycerate mutase family. BPG-dependent PGAM subfamily.

It carries out the reaction (2R)-2-phosphoglycerate = (2R)-3-phosphoglycerate. The protein operates within carbohydrate degradation; glycolysis; pyruvate from D-glyceraldehyde 3-phosphate: step 3/5. Its function is as follows. Catalyzes the interconversion of 2-phosphoglycerate and 3-phosphoglycerate. The polypeptide is 2,3-bisphosphoglycerate-dependent phosphoglycerate mutase (Chlorobium phaeobacteroides (strain DSM 266 / SMG 266 / 2430)).